Reading from the N-terminus, the 361-residue chain is DNA replication and repair protein RecF (361 aa).

30–37 (GDNAQGKT) provides a ligand contact to ATP.

The protein belongs to the RecF family.

The protein localises to the cytoplasm. Functionally, the RecF protein is involved in DNA metabolism; it is required for DNA replication and normal SOS inducibility. RecF binds preferentially to single-stranded, linear DNA. It also seems to bind ATP. This Clostridium botulinum (strain Alaska E43 / Type E3) protein is DNA replication and repair protein RecF.